We begin with the raw amino-acid sequence, 424 residues long: O-seryl-dTMP PLP-dependent decarboxylase (424 aa).

Belongs to the pyridoxal-phosphate-dependent aminodecarboxylase family.

It carries out the reaction 5-O-(L-seryl)-dTMP in DNA + H(+) = 5-aminoethoxy-methyl-dUMP in DNA + CO2. Its function is as follows. Converts 5-O-serinylthymidine (O-SerT) into 5-aminoethoxy-2'-deoxymethyluridine (5-NeOmdU) as a step in the pathway leading to thymidine hypermodifications in the viral genome. As a final result of the pathway of hypermodification, 5-NeOmdU substitutes for about 40% of the thymidines in the viral DNA. These modifications probably prevent degradation of viral genome by the host restriction-modification antiviral defense system. The chain is O-seryl-dTMP PLP-dependent decarboxylase from Salmonella phage ViI.